We begin with the raw amino-acid sequence, 400 residues long: CCA-adding enzyme (400 aa).

The ATP site is built by G28 and R31. The CTP site is built by G28 and R31. The Mg(2+) site is built by D41 and D43. ATP-binding residues include R112, D155, R158, R161, and R164. The CTP site is built by R112, D155, R158, R161, and R164.

The protein belongs to the tRNA nucleotidyltransferase/poly(A) polymerase family. Bacterial CCA-adding enzyme type 3 subfamily. As to quaternary structure, homodimer. Mg(2+) is required as a cofactor.

The catalysed reaction is a tRNA precursor + 2 CTP + ATP = a tRNA with a 3' CCA end + 3 diphosphate. It carries out the reaction a tRNA with a 3' CCA end + 2 CTP + ATP = a tRNA with a 3' CCACCA end + 3 diphosphate. Catalyzes the addition and repair of the essential 3'-terminal CCA sequence in tRNAs without using a nucleic acid template. Adds these three nucleotides in the order of C, C, and A to the tRNA nucleotide-73, using CTP and ATP as substrates and producing inorganic pyrophosphate. tRNA 3'-terminal CCA addition is required both for tRNA processing and repair. Also involved in tRNA surveillance by mediating tandem CCA addition to generate a CCACCA at the 3' terminus of unstable tRNAs. While stable tRNAs receive only 3'-terminal CCA, unstable tRNAs are marked with CCACCA and rapidly degraded. The sequence is that of CCA-adding enzyme from Staphylococcus aureus (strain bovine RF122 / ET3-1).